We begin with the raw amino-acid sequence, 627 residues long: Meiosis-specific transcription factor NDT80 (627 aa).

A DNA-binding region (NDT80) is located at residues 28 to 335; that stretch reads EEDTPVILTQ…RSPSNYASSQ (308 aa). The interval 324–410 is disordered; sequence RGRSPSNYAS…MEASKENEDP (87 aa). Polar residues-rich tracts occupy residues 327–351 and 386–401; these read SPSNYASSQRITVRTPSSVNSSQNS and SGASISPIKSRQSTPM.

Binds to DNA as a monomer. In terms of processing, phosphorylated by pachytene checkpoint kinase IME2, but also phosphorylated in an IME2-independent manner. Phosphorylation probably eliminates SUM1-mediated repression and is also required for full transcriptional activation activity. Phosphorylation of the DNA-binding domain by IME2 does not alter DNA binding affinity.

It localises to the nucleus. In terms of biological role, transcription factor required for successful completion of meiosis and spore formation. Gets activated after completion of meiotic recombination at the end of prophase I. Recognizes and binds to the middle sporulation element (MSE) 5'-C[AG]CAAA[AT]-3' in the promoter region of stage-specific genes that are required for progression through meiosis and sporulation. Competes for binding to MSE with the transcriptional repressor SUM1, which represses middle sporulation-specific genes during mitosis and early sporulation. The protein is Meiosis-specific transcription factor NDT80 (NDT80) of Saccharomyces cerevisiae (strain ATCC 204508 / S288c) (Baker's yeast).